The following is a 172-amino-acid chain: RNA pyrophosphohydrolase (172 aa).

The Nudix hydrolase domain maps to 6–149; that stretch reads GYRLNVGIVI…KRDVYRRAMK (144 aa). The Nudix box motif lies at 38-59; it reads GGIDDGETPEQAMFRELYEEVG.

This sequence belongs to the Nudix hydrolase family. RppH subfamily. It depends on a divalent metal cation as a cofactor.

Accelerates the degradation of transcripts by removing pyrophosphate from the 5'-end of triphosphorylated RNA, leading to a more labile monophosphorylated state that can stimulate subsequent ribonuclease cleavage. The polypeptide is RNA pyrophosphohydrolase (Vibrio vulnificus (strain CMCP6)).